Consider the following 510-residue polypeptide: MIWHVQNENFILDSTSIFMKAFHLLLFNGSFIFPECILIFGLILLLMFDSTSVQKDRPWFYFISSTCLVISITALLFRWREEPIISFSGNFQTNNFNEIFQFLILLCSTLCIPLSVEYIECTEMAITEFLLFVLTATLGGMFLCGANDLITIFVAPECFSLCSYLLSGYTERDLRSNGASLQYLLMGGAGSSILVHGFSWLYGSSGGEIELQEIVNGLINTQMYNSPGISLALISITVGLGFKLSPAPFHQWTPDVYEGSLLHFVAFHSITSKVAASASATRILEFSLYFSSNEWHLLLEILAILSMILGNLLAITQTSMKRMLAYSSIGQIGYVIIGIIVGDSNDGYASMITYMLFYISMNLGTFACIVLFGLRTGTDNIRDYAGLYTKDPFLALSLALCLLSLGGLPPLAGFFGKLYLFWCGWQAGLYFLVSIGLLTSVLSIYYYLKIIKLLMTGRNQEITPYVRNYRRSPLRSNNSIELSMTVCVIASTIPGISMNPILAIAQDTLF.

12 helical membrane passes run 24–44, 59–79, 99–119, 124–144, 149–169, 183–203, 229–249, 295–315, 323–343, 354–374, 395–415, and 418–438; these read LLLF…GLIL, WFYF…LFRW, IFQF…VEYI, MAIT…MFLC, LITI…LSGY, YLLM…WLYG, ISLA…PAPF, WHLL…LLAI, MLAY…IVGD, YMLF…LFGL, ALSL…AGFF, and LYLF…IGLL.

It belongs to the complex I subunit 2 family. As to quaternary structure, NDH is composed of at least 16 different subunits, 5 of which are encoded in the nucleus.

It localises to the plastid. The protein resides in the chloroplast thylakoid membrane. It catalyses the reaction a plastoquinone + NADH + (n+1) H(+)(in) = a plastoquinol + NAD(+) + n H(+)(out). It carries out the reaction a plastoquinone + NADPH + (n+1) H(+)(in) = a plastoquinol + NADP(+) + n H(+)(out). In terms of biological role, NDH shuttles electrons from NAD(P)H:plastoquinone, via FMN and iron-sulfur (Fe-S) centers, to quinones in the photosynthetic chain and possibly in a chloroplast respiratory chain. The immediate electron acceptor for the enzyme in this species is believed to be plastoquinone. Couples the redox reaction to proton translocation, and thus conserves the redox energy in a proton gradient. This Triticum aestivum (Wheat) protein is NAD(P)H-quinone oxidoreductase subunit 2 A, chloroplastic.